A 334-amino-acid chain; its full sequence is Beta-hexosaminidase (334 aa).

Residues D60, R68, R133, and 163–164 (KH) contribute to the substrate site. H176 (proton donor/acceptor) is an active-site residue. Catalysis depends on D247, which acts as the Nucleophile.

Belongs to the glycosyl hydrolase 3 family. NagZ subfamily.

It is found in the cytoplasm. It catalyses the reaction Hydrolysis of terminal non-reducing N-acetyl-D-hexosamine residues in N-acetyl-beta-D-hexosaminides.. It functions in the pathway cell wall biogenesis; peptidoglycan recycling. Functionally, plays a role in peptidoglycan recycling by cleaving the terminal beta-1,4-linked N-acetylglucosamine (GlcNAc) from peptide-linked peptidoglycan fragments, giving rise to free GlcNAc, anhydro-N-acetylmuramic acid and anhydro-N-acetylmuramic acid-linked peptides. The chain is Beta-hexosaminidase from Xanthomonas euvesicatoria pv. vesicatoria (strain 85-10) (Xanthomonas campestris pv. vesicatoria).